Here is a 482-residue protein sequence, read N- to C-terminus: MGLLAYLLVILLILNVFFAAVTVFLERRDTSATWAWLLVLTFVPIFGFIIYLIFGRKLSGKKIFDWKGQEKIGIQESTANQIEMIRQKEFPFSDPNVKKHRDLIYLLLVNDGAILTQDNEVELFVDGHEKFDALIADIENAKDHIHLIYYIFHSDELGNRLMRVLERKAAEGLNVKIIYDAMGSRTTKKSFFRTFQKNGGLVRPFFPSKLPLINFRLNYRNHRKLAIIDGDVGYIGGFNIGDEYLGASKKFGYWRDTHLRVHGKAVYAMQTRFIMDWNSASSTHKIDYKARYFPTFHGKGHTSMQIVSSGPDSEWQQIKNGYIKMINAAKKTIYLQSPYFIPDASLLEAIKIAALSGVDVRVMIPNKPDHAFVYRATTNYAGELMETGAKIFIYDNGFIHAKTLVVDGEIASVGTANMDFRSFRLNFEVNAFIYEKQMVQKLEDAFLEDILKSYQLTPELYAKRSLWIKFKEAVSRLLSPIL.

Helical transmembrane passes span 4–24 (LAYLLVILLILNVFFAAVTVF) and 34–54 (WAWLLVLTFVPIFGFIIYLIF). 2 consecutive PLD phosphodiesterase domains span residues 217–244 (LNYRNHRKLAIIDGDVGYIGGFNIGDEY) and 395–422 (DNGFIHAKTLVVDGEIASVGTANMDFRS). Residues histidine 222, lysine 224, aspartate 229, histidine 400, lysine 402, and aspartate 407 contribute to the active site.

This sequence belongs to the phospholipase D family. Cardiolipin synthase subfamily.

The protein localises to the cell membrane. The enzyme catalyses 2 a 1,2-diacyl-sn-glycero-3-phospho-(1'-sn-glycerol) = a cardiolipin + glycerol. Functionally, catalyzes the reversible phosphatidyl group transfer from one phosphatidylglycerol molecule to another to form cardiolipin (CL) (diphosphatidylglycerol) and glycerol. The sequence is that of Cardiolipin synthase (cls) from Listeria monocytogenes serotype 4a (strain HCC23).